The following is a 57-amino-acid chain: uncharacterized protein (57 aa).

The segment at M1–N57 is disordered. Basic and acidic residues-rich tracts occupy residues A12–K23 and D36–K45. Basic residues predominate over residues K46 to N57.

It belongs to the con-10 family.

This is an uncharacterized protein from Escherichia coli (strain K12).